Reading from the N-terminus, the 119-residue chain is Ribonuclease P protein component (119 aa).

The protein belongs to the RnpA family. Consists of a catalytic RNA component (M1 or rnpB) and a protein subunit.

It carries out the reaction Endonucleolytic cleavage of RNA, removing 5'-extranucleotides from tRNA precursor.. Functionally, RNaseP catalyzes the removal of the 5'-leader sequence from pre-tRNA to produce the mature 5'-terminus. It can also cleave other RNA substrates such as 4.5S RNA. The protein component plays an auxiliary but essential role in vivo by binding to the 5'-leader sequence and broadening the substrate specificity of the ribozyme. The chain is Ribonuclease P protein component from Aeromonas salmonicida (strain A449).